We begin with the raw amino-acid sequence, 642 residues long: MDKLKCPSFFKCREKEKVSASSENFHVGENDENQDRGNWSKKSDYLLSMIGYAVGLGNVWRFPYLTYSNGGGAFLIPYAIMLALAGLPLFFLECSLGQFASLGPVSVWRILPLFQGVGITMVLISIFVTIYYNVIIAYSLYYMFASFQSELPWKNCSSWSDKNCSRSPIVTHCNVSTVNKGIQEIIQMNKSWVDINNFTCINGSEIYQPGQLPSEQYWNKVALQRSSGMNETGVIVWYLALCLLLAWLIVGAALFKGIKSSGKVVYFTALFPYVVLLILLVRGATLEGASKGISYYIGAQSNFTKLKEAEVWKDAATQIFYSLSVAWGGLVALSSYNKFKNNCFSDAIVVCLTNCLTSVFAGFAIFSILGHMAHISGKEVSQVVKSGFDLAFIAYPEALAQLPGGPFWSILFFFMLLTLGLDSQFASIETITTTIQDLFPKVMKKMRVPITLGCCLVLFLLGLVCVTQAGIYWVHLIDHFCAGWGILIAAILELVGIIWIYGGNRFIEDTEMMIGAKRWIFWLWWRACWFVITPILLIAIFIWSLVQFHRPNYGAIPYPDWGVALGWCMIVFCIIWIPIMAIIKIIQAKGNIFQRLISCCRPASNWGPYLEQHRGERYKDMVDPKKEADHEIPTVSGSRKPE.

The Cytoplasmic portion of the chain corresponds to M1–D44. A run of 3 helical transmembrane segments spans residues Y45 to L65, G72 to L92, and I110 to I130. The Extracellular portion of the chain corresponds to Y131 to V234. Residues N155, N163, N174, N189, N197, N202, and N230 are each glycosylated (N-linked (GlcNAc...) asparagine). 2 helical membrane passes run I235–F255 and S261–V281. N302 carries an N-linked (GlcNAc...) asparagine glycan. The next 7 membrane-spanning stretches (helical) occupy residues A315–S335, I348–I368, L399–L419, I450–I477, F480–I500, C528–F548, and V563–I583. The Cytoplasmic portion of the chain corresponds to K584–E642. The span at V622 to I632 shows a compositional bias: basic and acidic residues. The interval V622–E642 is disordered.

The protein belongs to the sodium:neurotransmitter symporter (SNF) (TC 2.A.22) family. SLC6A14 subfamily. Levels are highest in adult and fetal lung, in trachea and salivary gland. Lower levels detected in mammary gland, stomach and pituitary gland, and very low levels in colon, uterus, prostate and testis.

It is found in the membrane. The protein resides in the apical cell membrane. The catalysed reaction is glycine(out) + chloride(out) + 2 Na(+)(out) = glycine(in) + chloride(in) + 2 Na(+)(in). It carries out the reaction L-leucine(out) + chloride(out) + 2 Na(+)(out) = L-leucine(in) + chloride(in) + 2 Na(+)(in). The enzyme catalyses L-glutamine(out) + chloride(out) + 2 Na(+)(out) = L-glutamine(in) + chloride(in) + 2 Na(+)(in). It catalyses the reaction L-arginine(out) + chloride(out) + 2 Na(+)(out) = L-arginine(in) + chloride(in) + 2 Na(+)(in). The catalysed reaction is (R)-carnitine(out) + chloride(out) + 2 Na(+)(out) = (R)-carnitine(in) + chloride(in) + 2 Na(+)(in). It carries out the reaction O-butanoyl-(R)-carnitine(out) + chloride(out) + 2 Na(+)(out) = O-butanoyl-(R)-carnitine(in) + chloride(in) + 2 Na(+)(in). The enzyme catalyses O-propanoyl-(R)-carnitine(out) + chloride(out) + 2 Na(+)(out) = O-propanoyl-(R)-carnitine(in) + chloride(in) + 2 Na(+)(in). It catalyses the reaction L-isoleucine(out) + chloride(out) + 2 Na(+)(out) = L-isoleucine(in) + chloride(in) + 2 Na(+)(in). The catalysed reaction is L-methionine(out) + chloride(out) + 2 Na(+)(out) = L-methionine(in) + chloride(in) + 2 Na(+)(in). It carries out the reaction L-valine(out) + chloride(out) + 2 Na(+)(out) = L-valine(in) + chloride(in) + 2 Na(+)(in). The enzyme catalyses L-alanine(out) + chloride(out) + 2 Na(+)(out) = L-alanine(in) + chloride(in) + 2 Na(+)(in). It catalyses the reaction L-serine(out) + chloride(out) + 2 Na(+)(out) = L-serine(in) + chloride(in) + 2 Na(+)(in). The catalysed reaction is L-cysteine(out) + chloride(out) + 2 Na(+)(out) = L-cysteine(in) + chloride(in) + 2 Na(+)(in). It carries out the reaction L-asparagine(out) + chloride(out) + 2 Na(+)(out) = L-asparagine(in) + chloride(in) + 2 Na(+)(in). The enzyme catalyses L-threonine(out) + chloride(out) + 2 Na(+)(out) = L-threonine(in) + chloride(in) + 2 Na(+)(in). It catalyses the reaction L-phenylalanine(out) + chloride(out) + 2 Na(+)(out) = L-phenylalanine(in) + chloride(in) + 2 Na(+)(in). The catalysed reaction is L-tryptophan(out) + chloride(out) + 2 Na(+)(out) = L-tryptophan(in) + chloride(in) + 2 Na(+)(in). It carries out the reaction L-tyrosine(out) + chloride(out) + 2 Na(+)(out) = L-tyrosine(in) + chloride(in) + 2 Na(+)(in). The enzyme catalyses L-histidine(out) + chloride(out) + 2 Na(+)(out) = L-histidine(in) + chloride(in) + 2 Na(+)(in). It catalyses the reaction L-lysine(out) + chloride(out) + 2 Na(+)(out) = L-lysine(in) + chloride(in) + 2 Na(+)(in). The catalysed reaction is beta-alanine(out) + chloride(out) + 2 Na(+)(out) = beta-alanine(in) + chloride(in) + 2 Na(+)(in). Functionally, amino acid transporter that plays an important role in the absorption of amino acids in the intestinal tract. Mediates the uptake of a broad range of neutral and cationic amino acids (with the exception of proline) in a Na(+)/Cl(-)-dependent manner. Transports non-alpha-amino acids such as beta-alanine with low affinity, and has a higher affinity for dipolar and cationic amino acids such as leucine and lysine. Can also transport carnitine, butirylcarnitine and propionylcarnitine coupled to the transmembrane gradients of Na(+) and Cl(-). The sequence is that of Sodium- and chloride-dependent neutral and basic amino acid transporter B(0+) from Homo sapiens (Human).